The primary structure comprises 35 residues: Photosystem II reaction center protein T (35 aa).

The chain crosses the membrane as a helical span at residues 3–23; it reads ALVYTFLLVSTLGIIFFAIFF.

Belongs to the PsbT family. PSII is composed of 1 copy each of membrane proteins PsbA, PsbB, PsbC, PsbD, PsbE, PsbF, PsbH, PsbI, PsbJ, PsbK, PsbL, PsbM, PsbT, PsbY, PsbZ, Psb30/Ycf12, at least 3 peripheral proteins of the oxygen-evolving complex and a large number of cofactors. It forms dimeric complexes.

The protein localises to the plastid. It localises to the chloroplast thylakoid membrane. Its function is as follows. Found at the monomer-monomer interface of the photosystem II (PS II) dimer, plays a role in assembly and dimerization of PSII. PSII is a light-driven water plastoquinone oxidoreductase, using light energy to abstract electrons from H(2)O, generating a proton gradient subsequently used for ATP formation. The sequence is that of Photosystem II reaction center protein T from Stangeria eriopus (Natal grass cycad).